Reading from the N-terminus, the 1002-residue chain is Collagen alpha-2(I) chain (1002 aa).

Positions 1 to 1002 (SGGFDFSFLP…PGPPGPPGAS (1002 aa)) are disordered. 4 positions are modified to 4-hydroxyproline: P10, P13, P28, and P34. Residues 17 to 60 (GPMGLMGPRGPPGASGAPGPQGFQGPAGEPGEPGQTGPAGARGP) show a composition bias toward low complexity. K89 is subject to 5-hydroxylysine; alternate. O-linked (Gal...) hydroxylysine; alternate glycosylation occurs at K89. Composition is skewed to low complexity over residues 145-166 (SRGS…SAGP) and 211-232 (PGAN…AGAP). The segment covering 266–275 (GESGGKGEPG) has biased composition (gly residues). Residues 276-286 (SAGPQGPPGSS) are compositionally biased toward low complexity. The segment covering 308 to 317 (GLRGGPGSRG) has biased composition (gly residues). Positions 330–346 (PAGARGASGPAGVRGPS) are enriched in low complexity. 2 positions are modified to 4-hydroxyproline: P352 and P355. Residues 381 to 400 (LPGIDGRPGPIGPAGARGEA) show a composition bias toward low complexity. The segment covering 449–458 (GVQGGKGEQG) has biased composition (gly residues). Composition is skewed to low complexity over residues 505–522 (PGES…SRGP) and 534–544 (EPGVVGAPGTA). The span at 545 to 554 (GPAGSGGLPG) shows a compositional bias: gly residues. Composition is skewed to low complexity over residues 577-621 (VGTT…PRGS) and 628-648 (VGPA…QPGA). Positions 649 to 658 (KGERGTKGPK) are enriched in basic and acidic residues. Residues 666–676 (PTGPVGSAGPA) are compositionally biased toward low complexity. Over residues 686 to 695 (GSRGDGGPPG) the composition is skewed to gly residues. Over residues 697–706 (TGFPGAAGRT) the composition is skewed to low complexity. Gly residues predominate over residues 743–752 (GETGAGGPPG). 2 stretches are compositionally biased toward low complexity: residues 760–787 (SGEP…LGLP) and 795–805 (LPGVAGAVGEP). Positions 806–828 (GPLGIGPPGARGPSGGVGPGVNG) are enriched in gly residues. Positions 833 to 851 (AGRDGPPGRDGLPGHKGER) are enriched in basic and acidic residues. Over residues 853–898 (YAGNAGPVGAAGAPGPHGAVGPAGKHGNRGEPGPVGSAGPVGALGP) the composition is skewed to low complexity. Positions 908 to 919 (RGDKGEAGDKGP) are enriched in basic and acidic residues. The span at 987-1002 (SGPPGPPGPPGPPGAS) shows a compositional bias: pro residues.

Belongs to the fibrillar collagen family. Trimers of one alpha 2(I) and two alpha 1(I) chains. Interacts (via C-terminus) with TMEM131 (via PapD-L domain); the interaction is direct and is involved in assembly and TRAPPIII ER-to-Golgi transport complex-dependent secretion of collagen. Prolines at the third position of the tripeptide repeating unit (G-X-Y) are hydroxylated in some or all of the chains. In terms of tissue distribution, expressed in bones.

It localises to the secreted. Its subcellular location is the extracellular space. It is found in the extracellular matrix. In terms of biological role, type I collagen is a member of group I collagen (fibrillar forming collagen). This Glossotherium robustum (Ground sloth) protein is Collagen alpha-2(I) chain.